The primary structure comprises 545 residues: Membrane protein insertase YidC (545 aa).

Helical transmembrane passes span 350 to 370 (IIGNWGWAIIVLTIIVKAVLY), 424 to 444 (LPMLLQIPVFIGLYWALFASV), 461 to 481 (ADPYYILPIIMAATMFAQTYL), and 498 to 518 (PLVFSVMFFFFPAGLVLYWVV).

It belongs to the OXA1/ALB3/YidC family. Type 1 subfamily. Interacts with the Sec translocase complex via SecD. Specifically interacts with transmembrane segments of nascent integral membrane proteins during membrane integration.

It is found in the cell inner membrane. Functionally, required for the insertion and/or proper folding and/or complex formation of integral membrane proteins into the membrane. Involved in integration of membrane proteins that insert both dependently and independently of the Sec translocase complex, as well as at least some lipoproteins. Aids folding of multispanning membrane proteins. The sequence is that of Membrane protein insertase YidC from Neisseria meningitidis serogroup B (strain ATCC BAA-335 / MC58).